We begin with the raw amino-acid sequence, 67 residues long: DNA-directed RNA polymerase subunit omega (67 aa).

The protein belongs to the RNA polymerase subunit omega family. As to quaternary structure, the RNAP catalytic core consists of 2 alpha, 1 beta, 1 beta' and 1 omega subunit. When a sigma factor is associated with the core the holoenzyme is formed, which can initiate transcription.

The catalysed reaction is RNA(n) + a ribonucleoside 5'-triphosphate = RNA(n+1) + diphosphate. Functionally, promotes RNA polymerase assembly. Latches the N- and C-terminal regions of the beta' subunit thereby facilitating its interaction with the beta and alpha subunits. The polypeptide is DNA-directed RNA polymerase subunit omega (Burkholderia ambifaria (strain ATCC BAA-244 / DSM 16087 / CCUG 44356 / LMG 19182 / AMMD) (Burkholderia cepacia (strain AMMD))).